The chain runs to 487 residues: 6-phosphogluconate dehydrogenase, decarboxylating 3, chloroplastic (487 aa).

The residue at position 1 (methionine 1) is an N-acetylmethionine. Residues 13 to 18 (GLAVMG), 36 to 38 (NRT), 80 to 82 (VKA), and asparagine 108 each bind NADP(+). Residues asparagine 108 and 134–136 (SGG) contribute to the substrate site. Lysine 188 (proton acceptor) is an active-site residue. Substrate is bound at residue 191–192 (HN). The active-site Proton donor is the glutamate 195. The substrate site is built by tyrosine 196, lysine 266, arginine 293, arginine 458, and histidine 464.

This sequence belongs to the 6-phosphogluconate dehydrogenase family. Forms homodimer. Forms heterodimers with PGD1 or PGD2.

Its subcellular location is the plastid. It is found in the chloroplast. The protein localises to the cytoplasm. The protein resides in the cytosol. The catalysed reaction is 6-phospho-D-gluconate + NADP(+) = D-ribulose 5-phosphate + CO2 + NADPH. Its pathway is carbohydrate degradation; pentose phosphate pathway; D-ribulose 5-phosphate from D-glucose 6-phosphate (oxidative stage): step 3/3. Its function is as follows. Catalyzes the oxidative decarboxylation of 6-phosphogluconate to ribulose 5-phosphate and CO(2), with concomitant reduction of NADP to NADPH. The polypeptide is 6-phosphogluconate dehydrogenase, decarboxylating 3, chloroplastic (Arabidopsis thaliana (Mouse-ear cress)).